The following is a 268-amino-acid chain: Phosphatidylglycerol--prolipoprotein diacylglyceryl transferase (268 aa).

The next 3 membrane-spanning stretches (helical) occupy residues Trp-25 to Phe-45, Tyr-57 to Phe-77, and Val-93 to Phe-113. A 1,2-diacyl-sn-glycero-3-phospho-(1'-sn-glycerol) is bound at residue Arg-142. 4 helical membrane-spanning segments follow: residues Ile-151–Pro-171, Val-175–Trp-195, Gly-204–Phe-224, and Pro-236–Phe-256.

This sequence belongs to the Lgt family.

The protein resides in the cell inner membrane. The catalysed reaction is L-cysteinyl-[prolipoprotein] + a 1,2-diacyl-sn-glycero-3-phospho-(1'-sn-glycerol) = an S-1,2-diacyl-sn-glyceryl-L-cysteinyl-[prolipoprotein] + sn-glycerol 1-phosphate + H(+). It participates in protein modification; lipoprotein biosynthesis (diacylglyceryl transfer). Its function is as follows. Catalyzes the transfer of the diacylglyceryl group from phosphatidylglycerol to the sulfhydryl group of the N-terminal cysteine of a prolipoprotein, the first step in the formation of mature lipoproteins. The sequence is that of Phosphatidylglycerol--prolipoprotein diacylglyceryl transferase from Chloroherpeton thalassium (strain ATCC 35110 / GB-78).